Consider the following 205-residue polypeptide: MANDTMIDSTQLRRSPAAHLAAAMEAAEVAGERAVTLREVAFTTQLGLRAVPGSTGHAALAAATGVGLPAAVGEVAGDVSGTAVLWLGPDEFLLAAEENPALLDTLQGALGQEPGQVLDLSANRSVLQLEGPAAALVLRKSCPADLHPREFGVNRAITTSLANIPVLLWRTGEQSWRILPRASFTEHTVHWLIDAMSEFSAAEVA.

Belongs to the SoxG family. As to quaternary structure, heterotetramer composed of subunits alpha (SoxA), beta (SoxB), gamma (SoxG) and delta (SoxD).

The protein localises to the cytoplasm. The enzyme catalyses sarcosine + (6S)-5,6,7,8-tetrahydrofolate + O2 = (6R)-5,10-methylene-5,6,7,8-tetrahydrofolate + glycine + H2O2. The catalysed reaction is sarcosine + O2 + H2O = formaldehyde + glycine + H2O2. Its activity is regulated as follows. Inhibited by Zn(2+), Cu(2+), Cd(2+), Hg(2+), Ag(+), p-chloromercuribenzoate (p-CMB), iodoacetamide, N-ethylmaleimide, CN(-), o-phenanthroline and sodium lauryl sulfate. In terms of biological role, in the presence of tetrahydrofolate, catalyzes the oxidative demethylation of sarcosine to yield glycine, 5,10-methylenetetrahydrofolate and hydrogen peroxide. In the absence of tetrahydrofolate, catalyzes the oxidative demethylation of sarcosine to yield glycine, formaldehyde and hydrogen peroxide. Can also use N-methyl-L-alanine and N-ethyl-L-glycine. Is very specific for oxygen as an acceptor. The polypeptide is Sarcosine oxidase subunit gamma (Corynebacterium sp. (strain U-96)).